The following is a 476-amino-acid chain: WD repeat, SAM and U-box domain-containing protein 1 (476 aa).

WD repeat units follow at residues 10–47, 52–91, 95–134, 137–176, 178–227, 237–276, and 279–318; these read DHSDDVNCCAFSSSCLATCSLDKTIRIYSLNDFTELPY, GHTYAVHCCCFSPSGHTLASCSTDGATIIWDTSDGRMLAV, PTGSPVRVCRFSPESTYLVSGAADGSVVLWNVHSMKFYRS, VKDGSLVACAFSPGGNFFVTGSSCGDLTVWDDKMRCLCNE, AHDL…FLGG, GHSAPVLTCAFSYDGQMLVSGSVDKCVIIYETNTGNILHT, and QHTRYVTTCAFAPCSLFLATGSMDKTVHIWKLDNKQPCAG. The SAM domain occupies 333-396; it reads WSEDDVSAWL…LQKIEELRMK (64 aa). The U-box domain occupies 403–476; the sequence is AVPDEFLCPI…ISRWLETQQK (74 aa).

The protein is WD repeat, SAM and U-box domain-containing protein 1 (WDSUB1) of Gallus gallus (Chicken).